Consider the following 444-residue polypeptide: Cell wall mannoprotein PST1 (444 aa).

The first 19 residues, 1-19, serve as a signal peptide directing secretion; the sequence is MQLHSLIASTALLITSALA. 15 N-linked (GlcNAc...) asparagine glycosylation sites follow: N57, N76, N83, N86, N196, N210, N228, N235, N242, N263, N268, N280, N292, N305, and N329. Composition is skewed to low complexity over residues 359-381 and 395-418; these read SVKL…SKSS and KAAA…SSKG. A disordered region spans residues 359 to 418; it reads SVKLSSTSKSQSSQTTAKVSKSSSKAEEKKFTSGDIKAAASASSVSSSGASSSSSKSSKG. N419 is lipidated: GPI-anchor amidated asparagine. A propeptide spans 420 to 444 (removed in mature form); sequence AAIMAPIGQTTPLVGLLTAIIMSIM.

Belongs to the SPS2 family. In terms of processing, extensively N- and O-mannosylated.

The protein resides in the cell membrane. The protein localises to the secreted. It localises to the cell wall. Its function is as follows. Has a partially redundant function to ECM33 in cell wall integrity. May be involved in a repair mechanism activated in response to cell wall damage. The chain is Cell wall mannoprotein PST1 (PST1) from Saccharomyces cerevisiae (strain ATCC 204508 / S288c) (Baker's yeast).